The primary structure comprises 158 residues: Endoribonuclease YbeY (158 aa).

Residues H122, H126, and H132 each contribute to the Zn(2+) site.

The protein belongs to the endoribonuclease YbeY family. Zn(2+) is required as a cofactor.

The protein resides in the cytoplasm. In terms of biological role, single strand-specific metallo-endoribonuclease involved in late-stage 70S ribosome quality control and in maturation of the 3' terminus of the 16S rRNA. The polypeptide is Endoribonuclease YbeY (Bacillus licheniformis (strain ATCC 14580 / DSM 13 / JCM 2505 / CCUG 7422 / NBRC 12200 / NCIMB 9375 / NCTC 10341 / NRRL NRS-1264 / Gibson 46)).